The sequence spans 199 residues: Holliday junction branch migration complex subunit RuvA (199 aa).

The segment at 1–63 (MIGCLIGEVF…EDAQQLYGFS (63 aa)) is domain I. Residues 64-142 (DAQEKTIFRT…TLAQGTSSAA (79 aa)) form a domain II region. A flexible linker region spans residues 143–150 (ALPQIQFV). The domain III stretch occupies residues 150–199 (VSNSPVAEAEAALQSLGYKPLEAQKAVAAVKADYTESADIIRAALKSMMK).

This sequence belongs to the RuvA family. As to quaternary structure, homotetramer. Forms an RuvA(8)-RuvB(12)-Holliday junction (HJ) complex. HJ DNA is sandwiched between 2 RuvA tetramers; dsDNA enters through RuvA and exits via RuvB. An RuvB hexamer assembles on each DNA strand where it exits the tetramer. Each RuvB hexamer is contacted by two RuvA subunits (via domain III) on 2 adjacent RuvB subunits; this complex drives branch migration. In the full resolvosome a probable DNA-RuvA(4)-RuvB(12)-RuvC(2) complex forms which resolves the HJ.

Its subcellular location is the cytoplasm. The RuvA-RuvB-RuvC complex processes Holliday junction (HJ) DNA during genetic recombination and DNA repair, while the RuvA-RuvB complex plays an important role in the rescue of blocked DNA replication forks via replication fork reversal (RFR). RuvA specifically binds to HJ cruciform DNA, conferring on it an open structure. The RuvB hexamer acts as an ATP-dependent pump, pulling dsDNA into and through the RuvAB complex. HJ branch migration allows RuvC to scan DNA until it finds its consensus sequence, where it cleaves and resolves the cruciform DNA. This chain is Holliday junction branch migration complex subunit RuvA, found in Acinetobacter baumannii (strain AB307-0294).